We begin with the raw amino-acid sequence, 88 residues long: Large ribosomal subunit protein bL27 (88 aa).

This sequence belongs to the bacterial ribosomal protein bL27 family.

The protein is Large ribosomal subunit protein bL27 of Mycobacterium leprae (strain TN).